Reading from the N-terminus, the 488-residue chain is Glutamyl-tRNA(Gln) amidotransferase subunit A (488 aa).

Active-site charge relay system residues include Lys77 and Ser152. The active-site Acyl-ester intermediate is Ser176.

Belongs to the amidase family. GatA subfamily. As to quaternary structure, heterotrimer of A, B and C subunits.

It carries out the reaction L-glutamyl-tRNA(Gln) + L-glutamine + ATP + H2O = L-glutaminyl-tRNA(Gln) + L-glutamate + ADP + phosphate + H(+). Its function is as follows. Allows the formation of correctly charged Gln-tRNA(Gln) through the transamidation of misacylated Glu-tRNA(Gln) in organisms which lack glutaminyl-tRNA synthetase. The reaction takes place in the presence of glutamine and ATP through an activated gamma-phospho-Glu-tRNA(Gln). The polypeptide is Glutamyl-tRNA(Gln) amidotransferase subunit A (Streptococcus mutans serotype c (strain ATCC 700610 / UA159)).